We begin with the raw amino-acid sequence, 520 residues long: Nonsense-mediated mRNA decay factor SMG9 (520 aa).

Positions 1 to 143 (MSESGHSQPG…KGEKEGQRPT (143 aa)) are disordered. At serine 2 the chain carries N-acetylserine. 5 positions are modified to phosphoserine: serine 2, serine 4, serine 7, serine 32, and serine 53. Residues 36-53 (GRERDYIAPWERERRDGS) show a composition bias toward basic and acidic residues. The segment covering 78–94 (QPPPPAAPAAPPAPAPL) has biased composition (pro residues). Positions 109 to 121 (GPAATTSTSTPEG) are enriched in low complexity. Positions 122–133 (TAPPPPAAPVPP) are enriched in pro residues. Serine 451 carries the phosphoserine modification.

It belongs to the SMG9 family. In terms of assembly, self-associates to form homodimers and forms heterodimers with SMG8; these assembly forms may represent SMG1C intermediate forms. Component of the SMG1C complex composed of SMG1, SMG8 and SMG9. Self-associates to form homodimers and forms heterodimers with SMG8; these assembly forms may represent SMG1C intermediate forms. Interacts with DHX34; the interaction is RNA-independent. Phosphorylated by SMG1.

Involved in nonsense-mediated decay (NMD) of mRNAs containing premature stop codons. Is recruited by release factors to stalled ribosomes together with SMG1 and SMG8 (forming the SMG1C protein kinase complex) and, in the SMG1C complex, is required for the efficient association between SMG1 and SMG8. Plays a role in brain, heart, and eye development. The polypeptide is Nonsense-mediated mRNA decay factor SMG9 (Bos taurus (Bovine)).